We begin with the raw amino-acid sequence, 464 residues long: Sushi-repeat-containing protein SRPX (464 aa).

The first 30 residues, 1–30, serve as a signal peptide directing secretion; it reads MGSPGLRPELLLPQVLPLLLALLHVLPSQG. An O-linked (Xyl...) (chondroitin sulfate) serine glycan is attached at Ser-34. Intrachain disulfides connect Cys-57/Cys-85, Cys-69/Cys-103, Cys-89/Cys-115, Cys-120/Cys-161, and Cys-147/Cys-174. Sushi domains are found at residues 57–117 and 118–176; these read CSPI…ICKQ and KRCP…SCVD. One can recognise an HYR domain in the interval 177-259; sequence LEPPRIKCPS…TCKFRVKVRV (83 aa). A Sushi 3 domain is found at 260–319; sequence RRCGKLNAPENGYMKCSSDGDNYGATCEFSCIGGYELQGSPARVCQSNLAWSGTEPSCAA. 2 disulfides stabilise this stretch: Cys-262–Cys-304 and Cys-290–Cys-317.

The protein is Sushi-repeat-containing protein SRPX (Srpx) of Mus musculus (Mouse).